The chain runs to 348 residues: Erlin-1 (348 aa).

Residues 1-7 are Cytoplasmic-facing; it reads MNMTQAR. A helical transmembrane segment spans residues 8 to 28; that stretch reads VLVAAVVGLVAVLLYASIHKI. At 29–348 the chain is on the lumenal side; it reads EEGHLAVYYR…NLIQNKESTG (320 aa). The N-linked (GlcNAc...) asparagine glycan is linked to Asn108. Residue Lys269 is modified to N6-acetyllysine. Over residues 321 to 333 the composition is skewed to basic and acidic residues; it reads TGRESSHPSKEAL. The interval 321 to 348 is disordered; sequence TGRESSHPSKEALEPSGENLIQNKESTG. Residues 339 to 348 show a composition bias toward polar residues; it reads NLIQNKESTG.

The protein belongs to the band 7/mec-2 family. As to quaternary structure, forms a heteromeric complex with ERLIN2. In complex with ERLIN2, interacts with RNF170. Interacts with AMFR and SYVN1. In terms of processing, deubiquitinated by USP25; leading to stabilization.

It is found in the endoplasmic reticulum membrane. Component of the ERLIN1/ERLIN2 complex which mediates the endoplasmic reticulum-associated degradation (ERAD) of inositol 1,4,5-trisphosphate receptors (IP3Rs). Involved in regulation of cellular cholesterol homeostasis by regulation the SREBP signaling pathway. Binds cholesterol and may promote ER retention of the SCAP-SREBF complex. The sequence is that of Erlin-1 from Pongo abelii (Sumatran orangutan).